A 576-amino-acid polypeptide reads, in one-letter code: Septation ring formation regulator EzrA (576 aa).

Residues 1-7 are Extracellular-facing; the sequence is MSSTVII. The helical transmembrane segment at 8–26 threads the bilayer; sequence LIVVLLVILVAFYAFAILM. The Cytoplasmic portion of the chain corresponds to 27–576; that stretch reads RKKTEDRILA…FKNKPTPDYL (550 aa). 2 coiled-coil regions span residues 105–134 and 277–301; these read RARE…VAQL and EQFE…LYAI.

It belongs to the EzrA family.

Its subcellular location is the cell membrane. Its function is as follows. Negative regulator of FtsZ ring formation; modulates the frequency and position of FtsZ ring formation. Inhibits FtsZ ring formation at polar sites. Interacts either with FtsZ or with one of its binding partners to promote depolymerization. This is Septation ring formation regulator EzrA from Lactococcus lactis subsp. lactis (strain IL1403) (Streptococcus lactis).